Here is a 327-residue protein sequence, read N- to C-terminus: Phenylalanine--tRNA ligase alpha subunit (327 aa).

Residue E252 coordinates Mg(2+).

This sequence belongs to the class-II aminoacyl-tRNA synthetase family. Phe-tRNA synthetase alpha subunit type 1 subfamily. Tetramer of two alpha and two beta subunits. The cofactor is Mg(2+).

The protein localises to the cytoplasm. The enzyme catalyses tRNA(Phe) + L-phenylalanine + ATP = L-phenylalanyl-tRNA(Phe) + AMP + diphosphate + H(+). This is Phenylalanine--tRNA ligase alpha subunit from Hamiltonella defensa subsp. Acyrthosiphon pisum (strain 5AT).